A 1314-amino-acid polypeptide reads, in one-letter code: MAEPRRVAFISLSPVRRREADFAGAEREPPRLEPQPYREPARAEPAPRADAQPPARDKPLPQREVSRAEPPMALQREPPRPEPPPPPLPLQTPPPRESASRAEPPPRPPKETVRLELVLKDPTDESCVEFSYPELLLCGEQRKKLVHTEDPFTDEHKERQEVEMLAKKFEMKYGGKARKHRKDRLQDLIDIGFGYDETDPFIDNSEAYDELVPASLTTKYGGFYINTGTLQFRQASDTEEDDFTDNQKHKPPKVPKIKEDDIEVKKRKRKEEGEKEKKPRKKVPKQLGVVALNSHKSEKKKKRYKDSLSLAAMIRKFQKEKDALKKESTPKVPVTPSSSSLPKPPCVTTALGDDIPDLGLNSADPDLPIFVSTNEHELFQEAENALEMLDDFDFDRLLDATSDGSPLSESGGENGNTTHPTFPSQVVPKVVPTLPEGLPVLLEKRIEDLRVAAKLFDEEGRKKFFTQDMNNILLDIELQLQELGPVIRSGVYSHLEAFVPCNKETLVKRLKKLHLNVQDDRLREPLQKLKLAVSNVMPEQLFKYQEDCQARSQAKCAKLQADEEREKNGSDDDDDEKPGKRVIGPRKKFHWDDTIRTLLCNLVEIKLGCYELEPNKSQSAEDYLKSFMETEVKPLWPKGWMQARMLFKESRSVHNHLTSAPAKKKVIPASKPKVKECSPKKDPKAPASVVASGGGPSTSSSTSIVASASSSSAPAQETICLDDSLDEDLSFPSASLDLVSEALAVINNGNKGPSVGSRLNVPTTKPRPGLREEKLASIMSKLPLATPKKLDSTQTAHSSSLIAGHTGPVPKKPQDLAHTGISSGLIAGSSIQNPKVSLEPLPARLLQQGLQRSSQIHASSSSQTHVSSSQAQAAASSHALGTSEAQDASSLTQVTKVHQHSAVQQNYVSPLQATISKSQTNPVVKLSNNPQLSCSSQLLKTSDKPLMYRLPLSTPSPGNGSQGPHPLVSRTAPSTTTSSNYLAKAMVSQISTQGFKSPFSMAASPKLAASPKPATSPKPLPSPKPSVSPKPSLSAKPSISTKQISKSNPAPKPAVCPSSSSPNTLVAQSSHSTSNNPVHKQPSGMNISRQSPTLNLLPSNRTSGLPTTKTLQAPSKLTNSSSTGTAGKNSLSGIPMNVPASRGSNLNSSGANRTSLSGGTGSGTQGATKPLSTPHRPTSASGSSVVTASVQSTAGASLLANASPLTLMTSPLSVTNQTVTPFGMLGGLVPVTMPFQFPLELLGFGTDTAGVTATSGSTSAALHHSLTQNLLKSLQPGAQHAAALPHSPLPAHLQQAFNDGGQSKGDTKLPRKPQ.

The segment at 1 to 113 (MAEPRRVAFI…PPPRPPKETV (113 aa)) is disordered. The residue at position 13 (Ser13) is a Phosphoserine. 2 stretches are compositionally biased toward basic and acidic residues: residues 16–31 (RRREADFAGAEREPPR) and 55–67 (ARDKPLPQREVSR). Pro residues predominate over residues 81–96 (PEPPPPPLPLQTPPPR). Thr229 carries the post-translational modification Phosphothreonine. Residue Ser236 is modified to Phosphoserine. The segment at 236-288 (SDTEEDDFTDNQKHKPPKVPKIKEDDIEVKKRKRKEEGEKEKKPRKKVPKQLG) is disordered. Thr238 is modified (phosphothreonine). Lys258 is covalently cross-linked (Glycyl lysine isopeptide (Lys-Gly) (interchain with G-Cter in SUMO2)). The residue at position 297 (Ser297) is a Phosphoserine. Disordered regions lie at residues 322–345 (DALKKESTPKVPVTPSSSSLPKPP), 400–424 (ATSDGSPLSESGGENGNTTHPTFPS), 559–584 (LQADEEREKNGSDDDDDEKPGKRVIG), 657–709 (LTSA…ASAS), 785–818 (ATPKKLDSTQTAHSSSLIAGHTGPVPKKPQDLAH), 849–893 (GLQR…SLTQ), 948–975 (YRLPLSTPSPGNGSQGPHPLVSRTAPST), 1003–1185 (ASPK…GSSV), and 1288–1314 (PLPAHLQQAFNDGGQSKGDTKLPRKPQ). Over residues 330-341 (PKVPVTPSSSSL) the composition is skewed to low complexity. Ser402, Ser405, and Ser408 each carry phosphoserine. Positions 415 to 424 (GNTTHPTFPS) are enriched in polar residues. 2 stretches are compositionally biased toward basic and acidic residues: residues 560–570 (QADEEREKNGS) and 673–684 (KVKECSPKKDPK). Ser570 bears the Phosphoserine mark. Over residues 685–709 (APASVVASGGGPSTSSSTSIVASAS) the composition is skewed to low complexity. Over residues 792–801 (STQTAHSSSL) the composition is skewed to polar residues. Positions 849 to 879 (GLQRSSQIHASSSSQTHVSSSQAQAAASSHA) are enriched in low complexity. The span at 883–893 (SEAQDASSLTQ) shows a compositional bias: polar residues. The span at 1003 to 1013 (ASPKLAASPKP) shows a compositional bias: low complexity. The span at 1014 to 1028 (ATSPKPLPSPKPSVS) shows a compositional bias: pro residues. Over residues 1029–1040 (PKPSLSAKPSIS) the composition is skewed to low complexity. N6-acetyllysine is present on Lys1036. Composition is skewed to polar residues over residues 1057–1132 (PSSS…NSLS) and 1142–1153 (RGSNLNSSGANR). Ser1091 bears the Phosphoserine mark. The residue at position 1116 (Lys1116) is an N6-acetyllysine. The segment covering 1305–1314 (GDTKLPRKPQ) has biased composition (basic and acidic residues).

This sequence belongs to the ubinuclein family.

This Mus musculus (Mouse) protein is Ubinuclein-2 (Ubn2).